Here is a 234-residue protein sequence, read N- to C-terminus: MSDAANPEGHKRSLPGRPPGIRADSSGLTDRQRRVIEVIRDSVQRRGYPPSMREIGQAVGLSSTSSVAHQLMALERKGFLRRDPHRPRAYEVRGSDQAASVQPTDTAGKPAASYVPLVGRIAAGGPILAEESVEDVFPLPRQLVGDGELFVLKVVGDSMIEAAICDGDWVTVRRQPVAENGDIVAAMLDGEATVKRFKREDGHVWLLPHNSAYEPIPGDDATILGKVVAVLRRV.

The interval 1 to 29 is disordered; it reads MSDAANPEGHKRSLPGRPPGIRADSSGLT. The H-T-H motif DNA-binding region spans 52-72; the sequence is MREIGQAVGLSSTSSVAHQLM. A disordered region spans residues 90–109; the sequence is YEVRGSDQAASVQPTDTAGK. Active-site for autocatalytic cleavage activity residues include Ser158 and Lys195.

It belongs to the peptidase S24 family. Homodimer.

The catalysed reaction is Hydrolysis of Ala-|-Gly bond in repressor LexA.. Its function is as follows. Represses a number of genes involved in the response to DNA damage (SOS response), including recA and lexA. In the presence of single-stranded DNA, RecA interacts with LexA causing an autocatalytic cleavage which disrupts the DNA-binding part of LexA, leading to derepression of the SOS regulon and eventually DNA repair. This chain is LexA repressor, found in Streptomyces coelicolor (strain ATCC BAA-471 / A3(2) / M145).